We begin with the raw amino-acid sequence, 105 residues long: Small ribosomal subunit protein uS10 (105 aa).

This sequence belongs to the universal ribosomal protein uS10 family. In terms of assembly, part of the 30S ribosomal subunit.

In terms of biological role, involved in the binding of tRNA to the ribosomes. The protein is Small ribosomal subunit protein uS10 of Rickettsia typhi (strain ATCC VR-144 / Wilmington).